The sequence spans 599 residues: Sulfite reductase [NADPH] flavoprotein alpha-component (599 aa).

The Flavodoxin-like domain occupies 64 to 202 (VTLISASQTG…AASEWRARVV (139 aa)). Residues 70 to 75 (SQTGNA), 117 to 120 (STQG), and 153 to 162 (LGDTSYEFFC) contribute to the FMN site. One can recognise an FAD-binding FR-type domain in the interval 234 to 448 (DAPLAATLSV…IEHNDNFRLP (215 aa)). FAD-binding positions include threonine 322, alanine 356, 386–389 (RLYS), 404–406 (TVG), tyrosine 410, and 419–422 (GGAS). NADP(+)-binding positions include 519–520 (SR), 525–529 (KIYVQ), and aspartate 561. Residue tyrosine 599 participates in FAD binding.

It belongs to the NADPH-dependent sulphite reductase flavoprotein subunit CysJ family. This sequence in the N-terminal section; belongs to the flavodoxin family. In the C-terminal section; belongs to the flavoprotein pyridine nucleotide cytochrome reductase family. In terms of assembly, alpha(8)-beta(8). The alpha component is a flavoprotein, the beta component is a hemoprotein. The cofactor is FAD. FMN serves as cofactor.

The catalysed reaction is hydrogen sulfide + 3 NADP(+) + 3 H2O = sulfite + 3 NADPH + 4 H(+). The protein operates within sulfur metabolism; hydrogen sulfide biosynthesis; hydrogen sulfide from sulfite (NADPH route): step 1/1. Component of the sulfite reductase complex that catalyzes the 6-electron reduction of sulfite to sulfide. This is one of several activities required for the biosynthesis of L-cysteine from sulfate. The flavoprotein component catalyzes the electron flow from NADPH -&gt; FAD -&gt; FMN to the hemoprotein component. This is Sulfite reductase [NADPH] flavoprotein alpha-component from Salmonella paratyphi B (strain ATCC BAA-1250 / SPB7).